A 165-amino-acid chain; its full sequence is Lipoprotein signal peptidase (165 aa).

A run of 3 helical transmembrane segments spans residues 6 to 26 (SSVE…LLII), 68 to 88 (GKID…LFYF), and 95 to 115 (ISFL…GNMI). Catalysis depends on residues Asp125 and Asp141. The chain crosses the membrane as a helical span at residues 132 to 152 (IWSFIFNFADVWINIGVVLII).

The protein belongs to the peptidase A8 family.

The protein localises to the cell inner membrane. The catalysed reaction is Release of signal peptides from bacterial membrane prolipoproteins. Hydrolyzes -Xaa-Yaa-Zaa-|-(S,diacylglyceryl)Cys-, in which Xaa is hydrophobic (preferably Leu), and Yaa (Ala or Ser) and Zaa (Gly or Ala) have small, neutral side chains.. It functions in the pathway protein modification; lipoprotein biosynthesis (signal peptide cleavage). In terms of biological role, this protein specifically catalyzes the removal of signal peptides from prolipoproteins. The polypeptide is Lipoprotein signal peptidase (Fusobacterium nucleatum subsp. nucleatum (strain ATCC 25586 / DSM 15643 / BCRC 10681 / CIP 101130 / JCM 8532 / KCTC 2640 / LMG 13131 / VPI 4355)).